The chain runs to 294 residues: tRNA dimethylallyltransferase (294 aa).

9 to 16 (GATATGKS) lines the ATP pocket. Residue 11–16 (TATGKS) coordinates substrate. The tract at residues 34 to 37 (DSRQ) is interaction with substrate tRNA.

It belongs to the IPP transferase family. In terms of assembly, monomer. The cofactor is Mg(2+).

The enzyme catalyses adenosine(37) in tRNA + dimethylallyl diphosphate = N(6)-dimethylallyladenosine(37) in tRNA + diphosphate. In terms of biological role, catalyzes the transfer of a dimethylallyl group onto the adenine at position 37 in tRNAs that read codons beginning with uridine, leading to the formation of N6-(dimethylallyl)adenosine (i(6)A). The polypeptide is tRNA dimethylallyltransferase (Trichormus variabilis (strain ATCC 29413 / PCC 7937) (Anabaena variabilis)).